The sequence spans 56 residues: Bdellin B-3 (56 aa).

Positions 1–42 constitute a Kazal-like domain; the sequence is DTECVCTKELHRVCGSDGVTYDNECLATCHGASVAHDHACEG. 3 cysteine pairs are disulfide-bonded: Cys4–Cys29, Cys6–Cys25, and Cys14–Cys40.

Functionally, proteinase inhibitor. Blocks the activity of trypsin, plasmin and sperm acrosin. The chain is Bdellin B-3 from Hirudo medicinalis (Medicinal leech).